The following is a 540-amino-acid chain: Coiled-coil domain-containing protein 116 (540 aa).

Residues 79–102 are a coiled coil; sequence QVLDSLQTVVEQATECVATMKTEA. The segment at 347–400 is disordered; the sequence is PGNSDLQPSSKASLPTDREARGETCYSPTSASSPKTSHRKSKDRRGSPSNAVQM. Composition is skewed to polar residues over residues 350–359 and 372–381; these read SDLQPSSKAS and YSPTSASSPK. Phosphoserine is present on Ser-393.

The protein resides in the cytoplasm. It localises to the cytoskeleton. It is found in the microtubule organizing center. Its subcellular location is the centrosome. This chain is Coiled-coil domain-containing protein 116 (Ccdc116), found in Rattus norvegicus (Rat).